The following is a 92-amino-acid chain: Co-chaperonin GroES (92 aa).

The protein belongs to the GroES chaperonin family. In terms of assembly, heptamer of 7 subunits arranged in a ring. Interacts with the chaperonin GroEL.

It localises to the cytoplasm. Its function is as follows. Together with the chaperonin GroEL, plays an essential role in assisting protein folding. The GroEL-GroES system forms a nano-cage that allows encapsulation of the non-native substrate proteins and provides a physical environment optimized to promote and accelerate protein folding. GroES binds to the apical surface of the GroEL ring, thereby capping the opening of the GroEL channel. The polypeptide is Co-chaperonin GroES (Thermotoga petrophila (strain ATCC BAA-488 / DSM 13995 / JCM 10881 / RKU-1)).